Consider the following 363-residue polypeptide: UDP-3-O-acylglucosamine N-acyltransferase (363 aa).

The Proton acceptor role is filled by His259.

This sequence belongs to the transferase hexapeptide repeat family. LpxD subfamily. As to quaternary structure, homotrimer.

It carries out the reaction a UDP-3-O-[(3R)-3-hydroxyacyl]-alpha-D-glucosamine + a (3R)-hydroxyacyl-[ACP] = a UDP-2-N,3-O-bis[(3R)-3-hydroxyacyl]-alpha-D-glucosamine + holo-[ACP] + H(+). Its pathway is bacterial outer membrane biogenesis; LPS lipid A biosynthesis. Catalyzes the N-acylation of UDP-3-O-acylglucosamine using 3-hydroxyacyl-ACP as the acyl donor. Is involved in the biosynthesis of lipid A, a phosphorylated glycolipid that anchors the lipopolysaccharide to the outer membrane of the cell. This Ruegeria pomeroyi (strain ATCC 700808 / DSM 15171 / DSS-3) (Silicibacter pomeroyi) protein is UDP-3-O-acylglucosamine N-acyltransferase.